Consider the following 559-residue polypeptide: Formate--tetrahydrofolate ligase (559 aa).

Residue threonine 68–threonine 75 coordinates ATP.

It belongs to the formate--tetrahydrofolate ligase family.

The catalysed reaction is (6S)-5,6,7,8-tetrahydrofolate + formate + ATP = (6R)-10-formyltetrahydrofolate + ADP + phosphate. Its pathway is one-carbon metabolism; tetrahydrofolate interconversion. The polypeptide is Formate--tetrahydrofolate ligase (Sinorhizobium fredii (strain NBRC 101917 / NGR234)).